The chain runs to 202 residues: Small ribosomal subunit protein uS4c (202 aa).

An S4 RNA-binding domain is found at Met90–Asn152.

Belongs to the universal ribosomal protein uS4 family. As to quaternary structure, part of the 30S ribosomal subunit. Contacts protein S5. The interaction surface between S4 and S5 is involved in control of translational fidelity.

The protein resides in the plastid. Its subcellular location is the chloroplast. One of the primary rRNA binding proteins, it binds directly to 16S rRNA where it nucleates assembly of the body of the 30S subunit. Its function is as follows. With S5 and S12 plays an important role in translational accuracy. The polypeptide is Small ribosomal subunit protein uS4c (rps4) (Dendrohypopterygium filiculiforme (Moss)).